The chain runs to 286 residues: MILVVGGTGTIGSEVVRLLQEAKLPFKALVRDAAKARELNARGVQTAAGDLREPRTLPAALGGVDKVFVVTPLVPDQVQMRAALITAAKTAGVKHFVMSTGIGAAPDSPVQIGRWLGENQQQVQESGMAWTFVQPGFFMQNLLMYAQAIREKGEFYMPLGEGKVSWIDARDIAAVAVQALTKPGHENQAYPVTGPQALSGAEVAAALSAAAGRPVRYVAITLEQAKQAMTGMGMPESLADAMNELYALAPPDYLAGVLDTVPKVTGRPARTFAEFAKAHAAAFGAA.

NADP(+) is bound by residues G6 to I11, R31, and G136 to N141.

This sequence belongs to the NmrA-type oxidoreductase family. Azoreductase type 3 subfamily. In terms of assembly, monomer.

Its function is as follows. Catalyzes the reductive cleavage of azo bond in aromatic azo compounds to the corresponding amines. Uses preferentially NADPH rather than NADH as an electron donor for its activity. The enzyme reductively cleaved Orange II and carboxy-Orange II, and can also reduce several sulfonated structural analogs, which carry a hydroxy group in the 2 position of the naphthol ring. In Xenophilus azovorans, this protein is NAD(P)H azoreductase (azoB).